Consider the following 266-residue polypeptide: Metallo-beta-lactamase VIM-1 (266 aa).

Residues 1–20 (MLKVISSLLVYMTASVMAVA) form the signal peptide. Zn(2+) is bound by residues His-114, His-116, Asp-118, His-179, Cys-198, and His-240.

It belongs to the metallo-beta-lactamase superfamily. Class-B beta-lactamase family. Monomer. Zn(2+) is required as a cofactor.

The protein resides in the periplasm. The catalysed reaction is a beta-lactam + H2O = a substituted beta-amino acid. Weakly inhibited by beta-lactamase-blocking agent sulbactam. In terms of biological role, class B beta-lactamase which confers resistance to the beta-lactam antibiotics, including penicillins, cephalosporins and carbapenems. Acts via hydrolysis of the beta-lactam ring. Has penicillin-, cephalosporin- and carbapenem-hydrolyzing activities. This is Metallo-beta-lactamase VIM-1 from Pseudomonas aeruginosa (strain ATCC 15692 / DSM 22644 / CIP 104116 / JCM 14847 / LMG 12228 / 1C / PRS 101 / PAO1).